A 150-amino-acid polypeptide reads, in one-letter code: Large ribosomal subunit protein uL15 (150 aa).

A disordered region spans residues 1–49 (MELHQLKSVSKSRNHKSKVVGRGHGSGLGKTSSRGQKGQKARKSGLTRL). Over residues 10–21 (SKSRNHKSKVVG) the composition is skewed to basic residues.

It belongs to the universal ribosomal protein uL15 family. As to quaternary structure, part of the 50S ribosomal subunit.

Binds to the 23S rRNA. The sequence is that of Large ribosomal subunit protein uL15 from Mycoplasma genitalium (strain ATCC 33530 / DSM 19775 / NCTC 10195 / G37) (Mycoplasmoides genitalium).